Consider the following 355-residue polypeptide: UPF0421 protein BALH_2468 (355 aa).

A run of 4 helical transmembrane segments spans residues 19-39, 74-94, 109-129, and 131-151; these read IAVF…IFAV, FTFF…FTIV, TLTA…AFLI, and LATT…ILPP.

It belongs to the UPF0421 family.

The protein resides in the cell membrane. The sequence is that of UPF0421 protein BALH_2468 from Bacillus thuringiensis (strain Al Hakam).